A 620-amino-acid chain; its full sequence is 1-deoxy-D-xylulose-5-phosphate synthase (620 aa).

Thiamine diphosphate is bound by residues His80 and 121–123; that span reads GHS. Position 152 (Asp152) interacts with Mg(2+). Thiamine diphosphate contacts are provided by residues 153-154, Asn181, Tyr288, and Glu370; that span reads GA. A Mg(2+)-binding site is contributed by Asn181.

Belongs to the transketolase family. DXPS subfamily. Homodimer. Mg(2+) serves as cofactor. It depends on thiamine diphosphate as a cofactor.

The catalysed reaction is D-glyceraldehyde 3-phosphate + pyruvate + H(+) = 1-deoxy-D-xylulose 5-phosphate + CO2. It participates in metabolic intermediate biosynthesis; 1-deoxy-D-xylulose 5-phosphate biosynthesis; 1-deoxy-D-xylulose 5-phosphate from D-glyceraldehyde 3-phosphate and pyruvate: step 1/1. Catalyzes the acyloin condensation reaction between C atoms 2 and 3 of pyruvate and glyceraldehyde 3-phosphate to yield 1-deoxy-D-xylulose-5-phosphate (DXP). The sequence is that of 1-deoxy-D-xylulose-5-phosphate synthase from Salmonella typhi.